The primary structure comprises 70 residues: Fumarase D (70 aa).

The protein belongs to the FumD family.

It catalyses the reaction (S)-malate = fumarate + H2O. Its function is as follows. In vitro catalyzes the addition of water to fumarate, forming malate. Cannot catalyze the reverse reaction. Cannot use the cis-isomer maleate as substrate. This Salmonella typhi protein is Fumarase D.